A 168-amino-acid chain; its full sequence is Pleiotrophin (168 aa).

A signal peptide spans 1–32 (MSSQQYQQQRRKFAAAFLALIFILAAVDTAEA). Intrachain disulfides connect cysteine 47–cysteine 76, cysteine 55–cysteine 85, cysteine 62–cysteine 89, cysteine 99–cysteine 131, and cysteine 109–cysteine 141. Chondroitin sulfate binding stretches follow at residues 92 to 99 (KKQFGAEC) and 123 to 131 (KRALHNADC). The segment at 139 to 168 (KPCGKLTKPKPQAESKKKKKEGKKQEKMLD) is disordered. The tract at residues 147 to 168 (PKPQAESKKKKKEGKKQEKMLD) is chondroitin sulfate A binding.

The protein belongs to the pleiotrophin family. As to quaternary structure, interacts with ALK and NEK6. Interacts with PTPRZ1 (via chondroitin sulfate groups); promotes formation of homooligomers; oligomerization impairs tyrosine phosphatase activity. Forms a complex with PTPRZ1 and CTNNB1; this complex inactivates PTPRZ1 protein tyrosine phosphatase activity through PTN interaction and stimulates tyrosine phosphorylation of CTNNB1. Interacts with ITGB3 and ITGA5. Forms a complex with PTPRZ1 and integrin alpha-V/beta-3 (ITGAV:ITGB3) that stimulates endothelial cell migration through ITGB3 'Tyr-773' phosphorylation. Interacts with SDC3 (via heparan sulfate chains); this interaction mediates the neurite outgrowth-promoting signal from PTN to the cytoskeleton of growing neurites; this interaction mediates osteoblast recruitment. Interacts with GPC2 (via heparan sulfate); this interaction promotes neurite outgrowth through binding of PTN with chondroitin sulfate of proteoglycans, thereby releasing PTPRS of chondroitin sulfate proteoglycans (CSPGs) and leading to binding with heparan sulfate of GPC2. In terms of processing, phosphorylated by NEK6. Osteoblast and brain. Expressed in the follicular epithelium and granulosa cells of the ovary. Strongly expressed in the uterus of newborn mice, and the degree of expression decreased in one-week-old mice, although the expression continues even in the uteri of adult mice. Expression gradually increases from proestrus to estrus, then decreases sharply, and thereafter gradually increased again. strongly expressed in the cochlea of WT mice 1 week after birth, and then the expression decreased and was undetectable by week 8 after birth. Expressed around the cell soma of osteocytes and apparently captured in the unmineralized interstitial matrix surrounding the cells. Furthermore distributed throughout the intraosseous canalicular porosity, being localized in the unmineralized matrix around the cell processes. Strongly expressed in the innermost layer of the periosteum.

Its subcellular location is the secreted. Functionally, secreted growth factor that mediates its signal through cell-surface proteoglycan and non-proteoglycan receptors. Binds cell-surface proteoglycan receptor via their chondroitin sulfate (CS) groups. Thereby regulates many processes like cell proliferation, cell survival, cell growth, cell differentiation and cell migration in several tissues namely neuron and bone. Also plays a role in synaptic plasticity and learning-related behavior by inhibiting long-term synaptic potentiation. Binds PTPRZ1, leading to neutralization of the negative charges of the CS chains of PTPRZ1, inducing PTPRZ1 clustering, thereby causing the dimerization and inactivation of its phosphatase activity leading to increased tyrosine phosphorylation of each of the PTPRZ1 substrates like ALK or AFAP1L2 in order to activate the PI3K-AKT pathway. Through PTPRZ1 binding controls oligodendrocyte precursor cell differentiation by enhancing the phosphorylation of AFAP1L2 in order to activate the PI3K-AKT pathway. Forms a complex with PTPRZ1 and integrin alpha-V/beta-3 (ITGAV:ITGB3) that stimulates endothelial cell migration through SRC dephosphorylation and activation that consequently leads to ITGB3 'Tyr-773' phosphorylation. In adult hippocampus promotes dendritic arborization, spine development, and functional integration and connectivity of newborn granule neurons through ALK by activating AKT signaling pathway. Binds GPC2 and chondroitin sulfate proteoglycans (CSPGs) at the neuron surface, leading to abrogation of binding between PTPRS and CSPGs and neurite outgrowth promotion. Binds SDC3 and mediates bone formation by recruiting and attaching osteoblasts/osteoblast precursors to the sites for new bone deposition. Binds ALK and promotes cell survival and cell proliferation through MAPK pathway activation. Inhibits proliferation and enhances differentiation of neural stem cells by inhibiting FGF2-induced fibroblast growth factor receptor signaling pathway. Mediates regulatory mechanisms in normal hemostasis and in hematopoietic regeneration and in maintaining the balance of myeloid and lymphoid regeneration. In addition may play a role in the female reproductive system, auditory response and the progesterone-induced decidualization pathway. This is Pleiotrophin from Mus musculus (Mouse).